The following is a 429-amino-acid chain: Forkhead box protein A1-A (429 aa).

Residues 159–253 (KPPYSYISLI…ENGCYLRRQK (95 aa)) constitute a DNA-binding region (fork-head). The span at 258–274 (EKTQGGKGNQDGRKDHS) shows a compositional bias: basic and acidic residues. Positions 258 to 341 (EKTQGGKGNQ…HSTHSLAHES (84 aa)) are disordered. The segment covering 287–304 (SSQMDSSSSMSNPSSSPQ) has biased composition (low complexity). Positions 325 to 336 (PLSSHQNHSTHS) are enriched in polar residues.

As to expression, at neurula stage, expressed in the notochord but not in the neural floor plate. During tailbud stages, expressed in the neural floor plate. At stage 35, expressed in the rhombencephalon, mesencephalon, pharyngeal pouches, foregut and pronephros. At stage 44, expressed in a region of the gut on the right hand side of the embryo. Expressed in the adult lung and liver.

The protein localises to the nucleus. Its function is as follows. Probable transcription factor. In Xenopus laevis (African clawed frog), this protein is Forkhead box protein A1-A (foxa1-a).